Here is a 199-residue protein sequence, read N- to C-terminus: MKFSPLLDELIQSLRCLPGVGPKSAQRMAFQLLERDRKAGLKLASALSSAMSDIGHCQSCRTYTEESLCPICSSHKRGSSSTICVVETPADVLAIEAGGHFTGRYFVLLGHLSPLDGVGPEELGLALLERHLASGDVAELILATNPTVEGEATAHFIADMARRHKVVISRIAHGVPVGGELEYVDSTTLALSFNGRIPL.

Residues 57-72 (CQSCRTYTEESLCPIC) form a C4-type zinc finger. The region spanning 81–176 (STICVVETPA…VISRIAHGVP (96 aa)) is the Toprim domain.

This sequence belongs to the RecR family.

Functionally, may play a role in DNA repair. It seems to be involved in an RecBC-independent recombinational process of DNA repair. It may act with RecF and RecO. This chain is Recombination protein RecR, found in Shewanella sp. (strain ANA-3).